A 761-amino-acid chain; its full sequence is Cytoplasmic export protein 1 (761 aa).

HEAT repeat units follow at residues 385–423 (IYPHFIQGLTDSDATLRLQTLKTIPCIVSCLTERQLNNE) and 498–534 (NTIANKILTVIAPGLLDKSPIVRGRAKILFEEYLEKL). Disordered stretches follow at residues 660–692 (DDGWIQDESGPSKVPQKHTRPQNSTLAKSIAPS) and 714–761 (STVT…DTNW). Polar residues-rich tracts occupy residues 680-692 (PQNSTLAKSIAPS) and 714-737 (STVTTKSSLSNKTARSKPISSIRG). Over residues 747-761 (GWDDDGDSDSWDTNW) the composition is skewed to acidic residues. The residue at position 754 (S754) is a Phosphoserine.

Associates with the nuclear pore complex (NPC). Interacts with GSP1, LOS1, MSN5, NUP116 and TEF2.

The protein resides in the cytoplasm. Component of the nuclear tRNA export machinery that my collect tRNA from the nuclear tRNA export receptors of the aminoacylation-dependent export and may deliver aminoacylated tRNAs to the translation machinery pathway at the nuclear pore complex. In Saccharomyces cerevisiae (strain ATCC 204508 / S288c) (Baker's yeast), this protein is Cytoplasmic export protein 1 (CEX1).